Consider the following 887-residue polypeptide: PAN2-PAN3 deadenylation complex subunit PAN3 (887 aa).

The C3H1-type zinc finger occupies 43-71; that stretch reads GVKLKYCRYYAKDKTCFYGEECQFLHEDP. Disordered regions lie at residues 102–147, 284–307, and 325–392; these read AVAG…IPGM, QTPN…SNVS, and SPAT…SGQV. Gly residues predominate over residues 122–138; it reads PGTGAAAGGGGSSGGLD. The tract at residues 147-498 is necessary and sufficient for interaction with PABPC1 but not needed for interaction with PAN2; sequence MDGGALTDTS…PPPNRIQKSS (352 aa). The PABPC-interacting motif-2 (PAM-2) motif lies at 284-299; sequence QTPNPTASEFIPKGGS. Positions 298–307 are enriched in polar residues; that stretch reads GSTSRLSNVS. Phosphoserine occurs at positions 354 and 361. Residues 363 to 392 are compositionally biased toward polar residues; it reads TPNPASYMVPSSASTSVNNPVSQTPSSGQV. A pseudokinase domain region spans residues 463-750; the sequence is QIDQADMPAV…SVNDIMPMIG (288 aa). ATP-binding positions include R521, 570–577, and 644–645; these read DFHAGGET and TK. Residues 751–789 are a coiled coil; sequence ARFYTQLDAAQMRNDVIEEDLAKEVQNGRLFRLLAKLGT. The knob domain stretch occupies residues 790 to 887; sequence INERPEFQKD…ELIAAANGQL (98 aa).

Belongs to the protein kinase superfamily. PAN3 family. Homodimer. Forms a heterotrimer with a catalytic subunit PAN2 to form the poly(A)-nuclease (PAN) deadenylation complex. Interacts (via PAM-2 motif) with poly(A)-binding protein PABPC1 (via PABC domain), conferring substrate specificity of the enzyme complex. Interacts with the GW182 family proteins TNRC6A, TNRC6B and TNRC6. Interacts with YTHDF3. In terms of assembly, interacts with PAN2. Interacts (via N-terminus) with PABPC1 at lower efficiency than isoform 3. As to quaternary structure, interacts with PAN2. Interacts (via N-terminus) with PABPC1 at higher efficiency than isoform 1.

It is found in the cytoplasm. Its subcellular location is the P-body. It localises to the nucleus. Its function is as follows. Regulatory subunit of the poly(A)-nuclease (PAN) deadenylation complex, one of two cytoplasmic mRNA deadenylases involved in general and miRNA-mediated mRNA turnover. PAN specifically shortens poly(A) tails of RNA and the activity is stimulated by poly(A)-binding protein (PABP). PAN deadenylation is followed by rapid degradation of the shortened mRNA tails by the CCR4-NOT complex. Deadenylated mRNAs are then degraded by two alternative mechanisms, namely exosome-mediated 3'-5' exonucleolytic degradation, or deadenylation-dependent mRNA decapping and subsequent 5'-3' exonucleolytic degradation by XRN1. PAN3 acts as a regulator for PAN activity, recruiting the catalytic subunit PAN2 to mRNA via its interaction with RNA and PABP, and to miRNA targets via its interaction with GW182 family proteins. Functionally, decreases PAN2-mediated deadenylation, possibly by preventing progression into the second CCR4-NOT mediated stage of biphasic deadenylation. Has a significant effect on mRNA stability, generally stabilizing a subset of the transcriptome. Stabilizes mRNAs degraded by the AU-rich element (ARE)-mediated mRNA decay pathway but promotes degradation of mRNAs by the microRNA-mediated pathway. Its activity influences mRNP remodeling, specifically reducing formation of a subset of P-bodies containing GW220, an isoform of TNRC6A. Enhances PAN2 deadenylase activity and has an extensive effect on mRNA stability, generally enhancing mRNA decay across the transcriptome by multiple pathways, including the AU-rich element (ARE)-mediated pathway, microRNA-mediated pathway and the nonsense-mediated pathway (NMD). Its activity is required for efficient P-body formation. May be involved in regulating mRNAs of genes involved in cell cycle progression and cell proliferation. This Homo sapiens (Human) protein is PAN2-PAN3 deadenylation complex subunit PAN3.